The following is a 154-amino-acid chain: Small ribosomal subunit protein uS9 (154 aa).

The interval 133–154 (RAKESKKYGLKKARKAPQYSKR) is disordered. Residues 140–154 (YGLKKARKAPQYSKR) show a composition bias toward basic residues.

Belongs to the universal ribosomal protein uS9 family.

The chain is Small ribosomal subunit protein uS9 from Salinispora tropica (strain ATCC BAA-916 / DSM 44818 / JCM 13857 / NBRC 105044 / CNB-440).